A 515-amino-acid polypeptide reads, in one-letter code: Signal transduction histidine-protein kinase/phosphatase MprB (515 aa).

At 1-24 (MTLPPPPSRLKPPRNTSSLSLRWR) the chain is on the cytoplasmic side. Residues 25 to 45 (VMLLAMSMVAMVVVLMSVAVY) form a helical membrane-spanning segment. Over 46 to 165 (AVVSRALYDD…TGQVLGRLGT (120 aa)) the chain is Extracellular. The helical transmembrane segment at 166 to 186 (VLLIVGGVGVAVAAIAGGMVA) threads the bilayer. The HAMP domain maps to 187–239 (RAGLRPVGRLTQAAERVARTDDLRPIPVFGSDELARLTEAFNMMLRALTESRE). The Cytoplasmic segment spans residues 187-515 (RAGLRPVGRL…GKSRSASKEL (329 aa)). One can recognise a Histidine kinase domain in the interval 247 to 467 (DAGHELRTPL…SFYVMLPGRP (221 aa)). The residue at position 250 (His250) is a Phosphohistidine; by autocatalysis. A disordered region spans residues 468 to 515 (LTPGGNGTAPVPAAQFDPDMRSAGSRADRRVIKNTETNGKSRSASKEL).

Requires Mg(2+) as cofactor. Mn(2+) serves as cofactor. Autophosphorylated.

The protein localises to the cell membrane. It carries out the reaction ATP + protein L-histidine = ADP + protein N-phospho-L-histidine.. Functionally, member of the two-component regulatory system MprB/MprA which contributes to maintaining a balance among several systems involved in stress resistance and is required for establishment and maintenance of persistent infection in the host. In response to environmental signals MprB acts both as a membrane-associated protein kinase that undergoes autophosphorylation and subsequently transfers the phosphate to MprA, and a protein phosphatase that dephosphorylates phospho-MprA. This chain is Signal transduction histidine-protein kinase/phosphatase MprB (mprB), found in Mycobacterium sp. (strain KMS).